The primary structure comprises 532 residues: Intercellular adhesion molecule 1 (532 aa).

The signal sequence occupies residues 1 to 27 (MAPSSPRPALPALLVLLGALFPGPGNA). Residues 28 to 480 (QTSVSPPKVI…TVNVLSPRYE (453 aa)) are Extracellular-facing. 2 consecutive Ig-like C2-type domains span residues 41-103 (GGSV…QSTA) and 128-193 (GKDL…LDLR). Disulfide bonds link Cys-48–Cys-92, Cys-52–Cys-96, and Cys-135–Cys-186. Asn-145 carries an N-linked (GlcNAc...) asparagine glycan. Positions 152 to 154 (RGE) match the Cell attachment site; atypical motif. N-linked (GlcNAc...) asparagine glycosylation is found at Asn-183, Asn-202, Asn-267, and Asn-296. 2 consecutive Ig-like C2-type domains span residues 230–297 (DTQG…LGNQ) and 325–378 (GTEV…LEVA). A disulfide bond links Cys-237 and Cys-290. An intrachain disulfide couples Cys-332 to Cys-371. N-linked (GlcNAc...) asparagine glycans are attached at residues Asn-385 and Asn-406. Cystine bridges form between Cys-403-Cys-419, Cys-419-Cys-457, and Cys-431-Cys-457. One can recognise an Ig-like C2-type 5 domain in the interval 412 to 464 (NSQQTPMCQASGNPLPELKCLKDGTFPLPVGESVTVTRDLEGTYLCRARSTQG). The chain crosses the membrane as a helical span at residues 481–503 (IVIITVVAAAVIMGTAGLSTYLY). Topologically, residues 504-532 (NRQRKIRKYRLQQAQKGTPMKPNTQATPP) are cytoplasmic. Phosphothreonine occurs at positions 521 and 530.

Belongs to the immunoglobulin superfamily. ICAM family. Homodimer. Interacts with MUC1 and promotes cell aggregation in epithelial cells. Interacts with ARHGEF26/SGEF. Interacts (on T cell side) with CD81, CD247 and CD9 at immunological synapses between antigen-presenting cells and T cells. Post-translationally, monoubiquitinated, which is promoted by MARCH9 and leads to endocytosis.

Its subcellular location is the membrane. ICAM proteins are ligands for the leukocyte adhesion protein LFA-1 (integrin alpha-L/beta-2). During leukocyte trans-endothelial migration, ICAM1 engagement promotes the assembly of endothelial apical cups through ARHGEF26/SGEF and RHOG activation. The protein is Intercellular adhesion molecule 1 (ICAM1) of Pan troglodytes (Chimpanzee).